We begin with the raw amino-acid sequence, 55 residues long: Large ribosomal subunit protein bL33B (55 aa).

Belongs to the bacterial ribosomal protein bL33 family.

The sequence is that of Large ribosomal subunit protein bL33B from Mycolicibacterium paratuberculosis (strain ATCC BAA-968 / K-10) (Mycobacterium paratuberculosis).